The chain runs to 305 residues: Imidazoleglycerol-phosphate dehydratase (305 aa).

It belongs to the imidazoleglycerol-phosphate dehydratase family.

The protein resides in the cytoplasm. It catalyses the reaction D-erythro-1-(imidazol-4-yl)glycerol 3-phosphate = 3-(imidazol-4-yl)-2-oxopropyl phosphate + H2O. The protein operates within amino-acid biosynthesis; L-histidine biosynthesis; L-histidine from 5-phospho-alpha-D-ribose 1-diphosphate: step 6/9. This is Imidazoleglycerol-phosphate dehydratase from Neisseria meningitidis serogroup C (strain 053442).